Here is a 366-residue protein sequence, read N- to C-terminus: Ribosomal RNA large subunit methyltransferase M (366 aa).

S-adenosyl-L-methionine contacts are provided by residues S188, 221-224 (CPGG), D240, D260, and D277. K306 (proton acceptor) is an active-site residue.

This sequence belongs to the class I-like SAM-binding methyltransferase superfamily. RNA methyltransferase RlmE family. RlmM subfamily. Monomer.

It is found in the cytoplasm. It catalyses the reaction cytidine(2498) in 23S rRNA + S-adenosyl-L-methionine = 2'-O-methylcytidine(2498) in 23S rRNA + S-adenosyl-L-homocysteine + H(+). Catalyzes the 2'-O-methylation at nucleotide C2498 in 23S rRNA. This Salmonella gallinarum (strain 287/91 / NCTC 13346) protein is Ribosomal RNA large subunit methyltransferase M.